The sequence spans 727 residues: Glycerol-3-phosphate dehydrogenase, mitochondrial (727 aa).

Residues 1 to 42 (MAFQKAVKRTVLVCGGALATVLGLSQCSHYRRKQVNLACLKA) constitute a mitochondrion transit peptide. 71-99 (DILVIGGGATGSGCALDAVTRGLKTALVE) provides a ligand contact to FAD. Position 601 is a phosphotyrosine (Tyr-601). 2 consecutive EF-hand domains span residues 623-658 (SDIE…INVK) and 659-694 (IDEN…IQKG). Residues Asp-672, Asn-674, Asn-676, Gln-678, and Glu-683 each contribute to the Ca(2+) site.

The protein belongs to the FAD-dependent glycerol-3-phosphate dehydrogenase family. The cofactor is FAD.

It is found in the mitochondrion. It catalyses the reaction a quinone + sn-glycerol 3-phosphate = dihydroxyacetone phosphate + a quinol. It functions in the pathway polyol metabolism; glycerol degradation via glycerol kinase pathway; glycerone phosphate from sn-glycerol 3-phosphate (aerobic route): step 1/1. Its activity is regulated as follows. Calcium-binding enhance the activity of the enzyme. Functionally, calcium-responsive mitochondrial glycerol-3-phosphate dehydrogenase which seems to be a key component of the pancreatic beta-cell glucose-sensing device. This Mesocricetus auratus (Golden hamster) protein is Glycerol-3-phosphate dehydrogenase, mitochondrial (GPD2).